Here is an 845-residue protein sequence, read N- to C-terminus: Beta-mannosidase B (845 aa).

The Proton donor role is filled by glutamate 432. N-linked (GlcNAc...) asparagine glycans are attached at residues asparagine 717 and asparagine 723.

The protein belongs to the glycosyl hydrolase 2 family. Beta-mannosidase B subfamily.

The catalysed reaction is Hydrolysis of terminal, non-reducing beta-D-mannose residues in beta-D-mannosides.. It participates in glycan metabolism; N-glycan degradation. In terms of biological role, exoglycosidase that cleaves the single beta-linked mannose residue from the non-reducing end of beta-mannosidic oligosaccharides of various complexity and length. Prefers mannobiose over mannotriose and has no activity against polymeric mannan. Is also severely restricted by galactosyl substitutions at the +1 subsite. The polypeptide is Beta-mannosidase B (mndB) (Aspergillus clavatus (strain ATCC 1007 / CBS 513.65 / DSM 816 / NCTC 3887 / NRRL 1 / QM 1276 / 107)).